Consider the following 491-residue polypeptide: UDP-N-acetylmuramoyl-L-alanyl-D-glutamate--2,6-diaminopimelate ligase (491 aa).

UDP-N-acetyl-alpha-D-muramoyl-L-alanyl-D-glutamate is bound at residue Ser-30. ATP is bound at residue 108–114; it reads GTNGKTT. UDP-N-acetyl-alpha-D-muramoyl-L-alanyl-D-glutamate is bound by residues Asn-149, 150 to 151, Ser-177, Gln-183, and Arg-185; that span reads TT. Lys-217 is subject to N6-carboxylysine. Meso-2,6-diaminopimelate-binding positions include Arg-383, 407–410, Gly-458, and Glu-462; that span reads DNPR. The Meso-diaminopimelate recognition motif signature appears at 407–410; it reads DNPR.

Belongs to the MurCDEF family. MurE subfamily. It depends on Mg(2+) as a cofactor. Carboxylation is probably crucial for Mg(2+) binding and, consequently, for the gamma-phosphate positioning of ATP.

Its subcellular location is the cytoplasm. The enzyme catalyses UDP-N-acetyl-alpha-D-muramoyl-L-alanyl-D-glutamate + meso-2,6-diaminopimelate + ATP = UDP-N-acetyl-alpha-D-muramoyl-L-alanyl-gamma-D-glutamyl-meso-2,6-diaminopimelate + ADP + phosphate + H(+). Its pathway is cell wall biogenesis; peptidoglycan biosynthesis. In terms of biological role, catalyzes the addition of meso-diaminopimelic acid to the nucleotide precursor UDP-N-acetylmuramoyl-L-alanyl-D-glutamate (UMAG) in the biosynthesis of bacterial cell-wall peptidoglycan. This chain is UDP-N-acetylmuramoyl-L-alanyl-D-glutamate--2,6-diaminopimelate ligase, found in Listeria monocytogenes serovar 1/2a (strain ATCC BAA-679 / EGD-e).